Consider the following 149-residue polypeptide: Large ribosomal subunit protein uL13 (149 aa).

Belongs to the universal ribosomal protein uL13 family. Part of the 50S ribosomal subunit.

Its function is as follows. This protein is one of the early assembly proteins of the 50S ribosomal subunit, although it is not seen to bind rRNA by itself. It is important during the early stages of 50S assembly. The protein is Large ribosomal subunit protein uL13 of Thermosipho africanus (strain TCF52B).